The primary structure comprises 279 residues: Shikimate dehydrogenase (NADP(+)) (279 aa).

Shikimate contacts are provided by residues 17-19 (SLS) and Thr-64. Lys-68 functions as the Proton acceptor in the catalytic mechanism. Asp-80 is an NADP(+) binding site. Shikimate contacts are provided by Asn-89 and Asp-105. NADP(+)-binding positions include 129-133 (GAGGS), 153-158 (NRTAKK), and Leu-221. A shikimate-binding site is contributed by Tyr-223. Gly-245 serves as a coordination point for NADP(+).

This sequence belongs to the shikimate dehydrogenase family. Homodimer.

It catalyses the reaction shikimate + NADP(+) = 3-dehydroshikimate + NADPH + H(+). It functions in the pathway metabolic intermediate biosynthesis; chorismate biosynthesis; chorismate from D-erythrose 4-phosphate and phosphoenolpyruvate: step 4/7. In terms of biological role, involved in the biosynthesis of the chorismate, which leads to the biosynthesis of aromatic amino acids. Catalyzes the reversible NADPH linked reduction of 3-dehydroshikimate (DHSA) to yield shikimate (SA). This is Shikimate dehydrogenase (NADP(+)) from Idiomarina loihiensis (strain ATCC BAA-735 / DSM 15497 / L2-TR).